The sequence spans 312 residues: Olfactory receptor 1D2 (312 aa).

Topologically, residues methionine 1–glutamine 25 are extracellular. A glycan (N-linked (GlcNAc...) asparagine) is linked at asparagine 5. The helical transmembrane segment at isoleucine 26–isoleucine 49 threads the bilayer. Residues asparagine 50–threonine 57 are Cytoplasmic-facing. The helical transmembrane segment at proline 58–proline 79 threads the bilayer. The Extracellular portion of the chain corresponds to lysine 80–glutamine 100. Cysteine 97 and cysteine 189 form a disulfide bridge. The chain crosses the membrane as a helical span at residues leucine 101 to tyrosine 120. Residues aspartate 121–lysine 139 are Cytoplasmic-facing. The helical transmembrane segment at leucine 140–isoleucine 158 threads the bilayer. The Extracellular segment spans residues histidine 159–histidine 196. A glycan (N-linked (GlcNAc...) asparagine) is linked at asparagine 195. The chain crosses the membrane as a helical span at residues threonine 197–valine 219. The Cytoplasmic segment spans residues leucine 220–lysine 236. A helical membrane pass occupies residues alanine 237–tyrosine 259. Over leucine 260 to serine 271 the chain is Extracellular. Residues valine 272–leucine 291 traverse the membrane as a helical segment. Topologically, residues arginine 292–threonine 312 are cytoplasmic.

Belongs to the G-protein coupled receptor 1 family.

It is found in the cell membrane. In terms of biological role, odorant receptor. This is Olfactory receptor 1D2 (OR1D2) from Gorilla gorilla gorilla (Western lowland gorilla).